The sequence spans 96 residues: Protein Vpr (96 aa).

Residues 1–42 are homooligomerization; it reads MEQAPEDQGPQREPNNEWTLEILEELKREAVRHFPRPWLHNL. Phosphoserine; by host occurs at positions 79, 94, and 96.

Belongs to the HIV-1 VPR protein family. As to quaternary structure, homooligomer, may form homodimer. Interacts with p6-gag region of the Pr55 Gag precursor protein through a (Leu-X-X)4 motif near the C-terminus of the P6gag protein. Interacts with host UNG. May interact with host RAD23A/HHR23A. Interacts with host VPRBP/DCAF1, leading to hijack the CUL4A-RBX1-DDB1-DCAF1/VPRBP complex, mediating ubiquitination of host proteins such as TERT and ZGPAT and arrest of the cell cycle in G2 phase. Post-translationally, phosphorylated on several residues by host. These phosphorylations regulate VPR activity for the nuclear import of the HIV-1 pre-integration complex.

It is found in the virion. The protein resides in the host nucleus. It localises to the host extracellular space. Its function is as follows. During virus replication, may deplete host UNG protein, and incude G2-M cell cycle arrest. Acts by targeting specific host proteins for degradation by the 26S proteasome, through association with the cellular CUL4A-DDB1 E3 ligase complex by direct interaction with host VPRPB/DCAF-1. Cell cycle arrest reportedly occurs within hours of infection and is not blocked by antiviral agents, suggesting that it is initiated by the VPR carried into the virion. Additionally, VPR induces apoptosis in a cell cycle dependent manner suggesting that these two effects are mechanistically linked. Detected in the serum and cerebrospinal fluid of AIDS patient, VPR may also induce cell death to bystander cells. Functionally, during virus entry, plays a role in the transport of the viral pre-integration (PIC) complex to the host nucleus. This function is crucial for viral infection of non-dividing macrophages. May act directly at the nuclear pore complex, by binding nucleoporins phenylalanine-glycine (FG)-repeat regions. The sequence is that of Protein Vpr from Human immunodeficiency virus type 1 group M subtype K (isolate 96CM-MP535) (HIV-1).